We begin with the raw amino-acid sequence, 199 residues long: FMN-dependent NADH:quinone oxidoreductase (199 aa).

Position 10 (Ser10) interacts with FMN.

The protein belongs to the azoreductase type 1 family. In terms of assembly, homodimer. It depends on FMN as a cofactor.

The catalysed reaction is 2 a quinone + NADH + H(+) = 2 a 1,4-benzosemiquinone + NAD(+). The enzyme catalyses N,N-dimethyl-1,4-phenylenediamine + anthranilate + 2 NAD(+) = 2-(4-dimethylaminophenyl)diazenylbenzoate + 2 NADH + 2 H(+). In terms of biological role, quinone reductase that provides resistance to thiol-specific stress caused by electrophilic quinones. Also exhibits azoreductase activity. Catalyzes the reductive cleavage of the azo bond in aromatic azo compounds to the corresponding amines. This chain is FMN-dependent NADH:quinone oxidoreductase, found in Cellvibrio japonicus (strain Ueda107) (Pseudomonas fluorescens subsp. cellulosa).